The primary structure comprises 252 residues: MSLATLETRLDHRFGNAALLEQALTHRSHSARHNERLEFLGDSVLNFVVAAMLFERFPKLDEGDLSRLRANLVKQASLADIGQRLELSQYLRLGEGELKSGGFRRPSILADAVEAIFGAAFLDGGFDTARKVIVRQYQPVLASVDPKTLGKDAKTLLQEFLQGRKLALPLYTVVATHGAAHSQQFEVECAIPALEIKVVAPGASRRAAEQSAAKLALEAAQAASPARAVRKQGKARKAAQLSLPVAVAQEVK.

One can recognise an RNase III domain in the interval 3-125; it reads LATLETRLDH…IFGAAFLDGG (123 aa). Residue Glu38 participates in Mg(2+) binding. Asp42 is a catalytic residue. The Mg(2+) site is built by Asp111 and Glu114. Glu114 is an active-site residue. A DRBM domain is found at 152-222; it reads DAKTLLQEFL…AKLALEAAQA (71 aa).

The protein belongs to the ribonuclease III family. In terms of assembly, homodimer. The cofactor is Mg(2+).

It localises to the cytoplasm. It carries out the reaction Endonucleolytic cleavage to 5'-phosphomonoester.. Digests double-stranded RNA. Involved in the processing of primary rRNA transcript to yield the immediate precursors to the large and small rRNAs (23S and 16S). Processes some mRNAs, and tRNAs when they are encoded in the rRNA operon. Processes pre-crRNA and tracrRNA of type II CRISPR loci if present in the organism. In Bordetella petrii (strain ATCC BAA-461 / DSM 12804 / CCUG 43448), this protein is Ribonuclease 3.